A 94-amino-acid polypeptide reads, in one-letter code: Co-chaperonin GroES (94 aa).

Belongs to the GroES chaperonin family. Heptamer of 7 subunits arranged in a ring. Interacts with the chaperonin GroEL.

Its subcellular location is the cytoplasm. Its function is as follows. Together with the chaperonin GroEL, plays an essential role in assisting protein folding. The GroEL-GroES system forms a nano-cage that allows encapsulation of the non-native substrate proteins and provides a physical environment optimized to promote and accelerate protein folding. GroES binds to the apical surface of the GroEL ring, thereby capping the opening of the GroEL channel. In Orientia tsutsugamushi (Rickettsia tsutsugamushi), this protein is Co-chaperonin GroES.